The chain runs to 293 residues: Nucleotide-binding protein Dole_0503 (293 aa).

Residue 11 to 18 coordinates ATP; the sequence is GLSGSGKS. 62–65 is a GTP binding site; sequence DLRE.

The protein belongs to the RapZ-like family.

Its function is as follows. Displays ATPase and GTPase activities. This Desulfosudis oleivorans (strain DSM 6200 / JCM 39069 / Hxd3) (Desulfococcus oleovorans) protein is Nucleotide-binding protein Dole_0503.